The following is a 494-amino-acid chain: Guanosine-5'-triphosphate,3'-diphosphate pyrophosphatase (494 aa).

It belongs to the GppA/Ppx family. GppA subfamily.

The enzyme catalyses guanosine 3'-diphosphate 5'-triphosphate + H2O = guanosine 3',5'-bis(diphosphate) + phosphate + H(+). It participates in purine metabolism; ppGpp biosynthesis; ppGpp from GTP: step 2/2. Its function is as follows. Catalyzes the conversion of pppGpp to ppGpp. Guanosine pentaphosphate (pppGpp) is a cytoplasmic signaling molecule which together with ppGpp controls the 'stringent response', an adaptive process that allows bacteria to respond to amino acid starvation, resulting in the coordinated regulation of numerous cellular activities. In Escherichia coli O157:H7, this protein is Guanosine-5'-triphosphate,3'-diphosphate pyrophosphatase.